Consider the following 640-residue polypeptide: Kelch-like protein 17 (640 aa).

The interval 1 to 50 (MQPRGERPAGRTQSPEHSSPGPGPEAPPPPQPPAPEAERARPRQARPAAP) is disordered. The segment covering 21–35 (GPGPEAPPPPQPPAP) has biased composition (pro residues). A BTB domain is found at 90-157 (CDIVLHVAAK…AYTAEIVVGE (68 aa)). The region spanning 192–294 (CLGIRGFADT…SRDFLLGHVD (103 aa)) is the BACK domain. Positions 287–639 (DFLLGHVDAE…SPTLSVSSTS (353 aa)) are interaction with F-actin. Kelch repeat units lie at residues 341-387 (VLFA…AVGN), 388-434 (RLYA…ALHG), 436-481 (LYAA…TLDG), 482-528 (NLYA…VLEG), 530-575 (LYVA…AMDG), and 576-622 (WLYA…VLEL). The interaction with PDZK1 stretch occupies residues 638 to 640 (TSL).

Interacts with F-actin; the interaction disrupts the F-actin structures and leads to marked changes of neuronal morphology. Component of a complex, composed of PDZK1, SYNGAP1, KLHL17 and NMDA receptors. Interacts directly with PDZK1 (via PDZ1 domain); the interaction is important for integrity of actin cytoskeleton structures in neurons. Interacts with DLG4 and SYNGAP1. Interacts (via kelch repeats) with GRIK2 (via C-terminus); the interaction targets GRIK2 for degradation via ubiquitin-proteasome pathway. Interacts with GRIK1. Interacts with (via BTB domain) CUL3; the interaction regulates surface GRIK2 expression.

It is found in the postsynaptic density. The protein resides in the synapse. Its pathway is protein modification; protein ubiquitination. Functionally, substrate-recognition component of some cullin-RING-based BCR (BTB-CUL3-RBX1) E3 ubiquitin-protein ligase complexes. The BCR(KLHL17) complex mediates the ubiquitination and subsequent degradation of GLUR6. May play a role in the actin-based neuronal function. This is Kelch-like protein 17 (Klhl17) from Mus musculus (Mouse).